Consider the following 880-residue polypeptide: MSTVEPNVYDPHQVETSAQQFWDATRAFQVDENSEKPKFYCLSMLPYPSGALHMGHVRNYTISDVVSRYKRMTGHNVLQPMGWDAFGLPAENAAIKNKTAPAKWTYANIAHMRAQLKSLGYAIDWSREFATCTPDYYVHEQRMFTRLMRKGLAYRRNAVVNWDPIDQTVLANEQVIDGRGWRSGAVVEKREIPQWFLRITDYAQELLDGLDQLDGWPDSVKTMQRNWIGRSEGLEIQFDVRDTNGAALDPLRVFTTRPDTLMGVTFVSIAAEHPLALHAAKSNPELAALLETLKHGGVSEAELETQEKRGMATGLTAVHPISGEQVPVWVANFVLMGYGTGAVMAVPGHDQRDFEFANKYGLPIVQVVKLREPRNDDEQRWDATEWRDWYTDKSRELELINSAEFDGLDFGGAFEALAERFERKGQGQRRVNYRLRDWGVSRQRYWGCPIPVIYCPKCGAVPVPEDQLPVVLPENVEFACTGSPIKTDPTWRQTTCPDCGGPAERETDTFDTFMESSWYVARYTSPNAREMVDRRANYWMPADLYVGGIEHAILHLMYFRFYHKLMRDARLVDSDEPVTNLLTQGMVIADTFYRDADNGGKDWINPADVEIQRDERGRVTGAVLIADGQPVHIGGTEKMSKSKNNGVDPQSMVAKYGADTVRLFSMFAAPPEQSLEWNEAGVDGMARFMRRLWAQVHKHVGEGAAVALDVAALSAEQKAIRRKTHETIGKVSDDYGRRHSFNTAIAAVMELSNALAKFDDASDQGRAVRQEALEAMVLLLNPITPHASHALWQVLGRGETLLENVAFPQADVSALVRDALTLAVQINGKLRGTIDVAADAAREQIEALAQAEPNAAKFLDGLSVRKIIIVPGKIVNIVAG.

The 'HIGH' region motif lies at 46-56 (PYPSGALHMGH). The 'KMSKS' region signature appears at 638 to 642 (KMSKS). Position 641 (K641) interacts with ATP.

The protein belongs to the class-I aminoacyl-tRNA synthetase family.

The protein localises to the cytoplasm. The catalysed reaction is tRNA(Leu) + L-leucine + ATP = L-leucyl-tRNA(Leu) + AMP + diphosphate. The polypeptide is Leucine--tRNA ligase (Xanthomonas oryzae pv. oryzae (strain KACC10331 / KXO85)).